The sequence spans 371 residues: Bifunctional enzyme IspD/IspF (371 aa).

Residues 1-210 (MSEISLIMLA…LDLPTPSFEI (210 aa)) are 2-C-methyl-D-erythritol 4-phosphate cytidylyltransferase. The segment at 211–371 (FTGNGFDVHE…NLKYFDWTRL (161 aa)) is 2-C-methyl-D-erythritol 2,4-cyclodiphosphate synthase. A divalent metal cation-binding residues include Asp217 and His219. Residues 217–219 (DVH) and 243–244 (HS) each bind 4-CDP-2-C-methyl-D-erythritol 2-phosphate. His251 serves as a coordination point for a divalent metal cation. 4-CDP-2-C-methyl-D-erythritol 2-phosphate contacts are provided by residues 265–267 (DIG), 270–274 (YPDTD), 341–344 (TTTE), Phe348, and Arg351.

This sequence in the N-terminal section; belongs to the IspD/TarI cytidylyltransferase family. IspD subfamily. In the C-terminal section; belongs to the IspF family. A divalent metal cation is required as a cofactor.

It carries out the reaction 2-C-methyl-D-erythritol 4-phosphate + CTP + H(+) = 4-CDP-2-C-methyl-D-erythritol + diphosphate. The enzyme catalyses 4-CDP-2-C-methyl-D-erythritol 2-phosphate = 2-C-methyl-D-erythritol 2,4-cyclic diphosphate + CMP. Its pathway is isoprenoid biosynthesis; isopentenyl diphosphate biosynthesis via DXP pathway; isopentenyl diphosphate from 1-deoxy-D-xylulose 5-phosphate: step 2/6. It functions in the pathway isoprenoid biosynthesis; isopentenyl diphosphate biosynthesis via DXP pathway; isopentenyl diphosphate from 1-deoxy-D-xylulose 5-phosphate: step 4/6. Bifunctional enzyme that catalyzes the formation of 4-diphosphocytidyl-2-C-methyl-D-erythritol from CTP and 2-C-methyl-D-erythritol 4-phosphate (MEP) (IspD), and catalyzes the conversion of 4-diphosphocytidyl-2-C-methyl-D-erythritol 2-phosphate (CDP-ME2P) to 2-C-methyl-D-erythritol 2,4-cyclodiphosphate (ME-CPP) with a corresponding release of cytidine 5-monophosphate (CMP) (IspF). This is Bifunctional enzyme IspD/IspF from Campylobacter jejuni subsp. jejuni serotype O:23/36 (strain 81-176).